A 120-amino-acid chain; its full sequence is Large ribosomal subunit protein uL18 (120 aa).

Belongs to the universal ribosomal protein uL18 family. In terms of assembly, part of the 50S ribosomal subunit; part of the 5S rRNA/L5/L18/L25 subcomplex. Contacts the 5S and 23S rRNAs.

This is one of the proteins that bind and probably mediate the attachment of the 5S RNA into the large ribosomal subunit, where it forms part of the central protuberance. The polypeptide is Large ribosomal subunit protein uL18 (Staphylococcus haemolyticus (strain JCSC1435)).